The primary structure comprises 207 residues: MSKLKIDTKRRFSLLIALVLIISLSSCATTQTNVTTKTVFNQETTYHNLLKLKKWQANGVIGIIYDNQAESANYTYLQDGDNFSIKLYGPLGIGSIEIKGDTNSVLLANSKGQKLTAKDAKTLMLEQLGWYVPVEGLKYWIKAIAIPNIRQTSELNTNNLLSKLSQNGWSISYSNYQLVDSKYPLPTKIRMSRDNLTLKIVIKSWQI.

Residues 1–26 (MSKLKIDTKRRFSLLIALVLIISLSS) form the signal peptide. A lipid anchor (N-palmitoyl cysteine) is attached at C27. C27 is lipidated: S-diacylglycerol cysteine.

Belongs to the LolB family. In terms of assembly, monomer.

The protein resides in the cell outer membrane. In terms of biological role, plays a critical role in the incorporation of lipoproteins in the outer membrane after they are released by the LolA protein. The protein is Outer-membrane lipoprotein LolB of Francisella tularensis subsp. tularensis (strain FSC 198).